The sequence spans 520 residues: MSQALPVRDQGRDQGIFAGTLPPAPPKFKWTRLDTYTWAIIAVFALVTRFTGLSSATASGTPVFDEKHYVPQAWDMVRSWINPITGGIESNPGYGLVVHPPLAKQLEALGEWVFGYTPLGWRIMVAIFGTLTIFAIMAIARRLSGSTMVTFIAGILALADGVLLVSSRFGMLDIFLVFFITAAAWALIRDHQQMHQRLNDLLLTNGQITKDFGPRFGFRWWRFTTGVFLGLALSVKWSGLYYIAFFGLTSVFLDLWLRKRYGVRRYVTGTLKNDVIPALGSLVIIPALLYIWSWRAWFASETSVYRHAKTDGTITEDSILQLFPESIAGWIHYHISVLEFHGSLTTSSGHSHPWDSKPWAWLVSGRPILYFSSTDISCDVGGTCRRMIYLFGTPAIWWLTVPVILWALWSFFARRSRGYVVPLVAFAAGFLPWLAAYDRQMYFFYATALVPFTIIMLALACGELWGRGKMTPTGLTRGSMAVVTYISLVVMMFLAFSPLFYGFVIPDYVYESLMWFPSWR.

The next 10 membrane-spanning stretches (helical) occupy residues 38–58 (WAII…SATA), 119–139 (LGWR…IMAI), 145–165 (GSTM…VLLV), 168–188 (RFGM…WALI), 237–257 (WSGL…DLWL), 274–294 (DVIP…IWSW), 388–408 (IYLF…LWAL), 418–438 (GYVV…AAYD), 441–461 (MYFF…ALAC), and 485–505 (YISL…GFVI).

It belongs to the glycosyltransferase 39 family.

It is found in the cell membrane. It participates in protein modification; protein glycosylation. Its function is as follows. Protein O-mannosyltransferase that catalyzes the transfer of a single mannose residue from a polyprenol phospho-mannosyl lipidic donor to the hydroxyl group of selected serine and threonine residues in acceptor proteins. The polypeptide is Polyprenol-phosphate-mannose--protein mannosyltransferase (pmt) (Corynebacterium glutamicum (strain ATCC 13032 / DSM 20300 / JCM 1318 / BCRC 11384 / CCUG 27702 / LMG 3730 / NBRC 12168 / NCIMB 10025 / NRRL B-2784 / 534)).